The primary structure comprises 105 residues: ATP-dependent Clp protease adapter protein ClpS (105 aa).

This sequence belongs to the ClpS family. Binds to the N-terminal domain of the chaperone ClpA.

In terms of biological role, involved in the modulation of the specificity of the ClpAP-mediated ATP-dependent protein degradation. In Klebsiella pneumoniae (strain 342), this protein is ATP-dependent Clp protease adapter protein ClpS.